A 258-amino-acid chain; its full sequence is Probable F-box protein At2g29610 (258 aa).

The interval 1-25 (MVELSEIPGDPNGADPNNNPQEEDE) is disordered. The span at 8 to 20 (PGDPNGADPNNNP) shows a compositional bias: low complexity. The region spanning 28–74 (LPILLQLPEELIERIIAHFPQCYSPSPILVCETFRQVINSDHFYYVT) is the F-box domain.

This chain is Probable F-box protein At2g29610, found in Arabidopsis thaliana (Mouse-ear cress).